The chain runs to 217 residues: MKRVIYKTIFCGLTLLTSLSSCSLDPKGYNLETKNSRDLNQESVILKENRETPSLVKRLSRRSRRLFARRDQTQKDTLQVQANFKTYAEKISEQDERDLSFVVSSAAEKSSISLALSQGEIKDALYRIREVHPLALIEALAENPALIEGMKKMQGRDWIWNLFLTQLSEVFSQAWSQGVISEEDIAAFASTLGLDSGTVASIVQGERWPELVDIVIT.

The first 21 residues, 1–21 (MKRVIYKTIFCGLTLLTSLSS), serve as a signal peptide directing secretion. C22 carries N-palmitoyl cysteine lipidation. Residue C22 is the site of S-diacylglycerol cysteine attachment.

The protein belongs to the chlamydial CPn_0875/CT_734/TC_0107 family.

Its subcellular location is the cell membrane. This is Probable lipoprotein CPn_0875/CP_0994/CPj0875/CpB0904 from Chlamydia pneumoniae (Chlamydophila pneumoniae).